Reading from the N-terminus, the 213-residue chain is mRNA-decapping protein OPG121 (213 aa).

Residues Glu-16 and Arg-50 each contribute to the N(7)-methyl-GTP site. Residues 30–209 enclose the Nudix hydrolase domain; that stretch reads KDTHVFAACI…EYLSYIYNIL (180 aa). The short motif at 111–132 is the Nudix box element; sequence GKLDKKESIKDCLRRELKEESD. Mg(2+) is bound by residues Glu-126 and Glu-130. Position 151 (Asp-151) interacts with N(7)-methyl-GTP. Glu-183 serves as a coordination point for Mg(2+).

It belongs to the Nudix hydrolase family. As to quaternary structure, interacts with the late transcription elongation factor VLTF-4/OPG110. Interacts with the late transcription factors VLTF-1. It depends on Mg(2+) as a cofactor. Mn(2+) serves as cofactor.

It catalyses the reaction a 5'-end (N(7)-methyl 5'-triphosphoguanosine)-guanosine in mRNA + H2O = a 5'-end phospho-guanosine in mRNA + N(7)-methyl-GDP + 2 H(+). Functionally, acts with RNA polymerase to initiate transcription from late gene promoters. This Cynomys gunnisoni (Gunnison's prairie dog) protein is mRNA-decapping protein OPG121 (OPG121).